A 491-amino-acid chain; its full sequence is La-related protein 6 (491 aa).

The interval 1-87 (MAQSGGEARP…REDLEQEWKP (87 aa)) is disordered. Residue A2 is modified to N-acetylalanine. The span at 24–37 (EAEDVDELEDEEEG) shows a compositional bias: acidic residues. Phosphoserine is present on residues S56 and S58. The 92-residue stretch at 86–177 (KPPDEELIKK…RRTTPVPLFP (92 aa)) folds into the HTH La-type RNA-binding domain. Residues 184–296 (KMLLVYDLYL…KAVLIGMKPP (113 aa)) enclose the RRM domain. A Nuclear export signal motif is present at residues 186 to 193 (LLVYDLYL). Disordered stretches follow at residues 293 to 403 (MKPP…EEGR) and 423 to 491 (SSVT…RACV). A Nuclear localization signal motif is present at residues 296–302 (PKKKPAK). Residues 332-346 (DESSANSSSDPESNP) show a composition bias toward low complexity. 2 stretches are compositionally biased toward polar residues: residues 359-386 (NKLS…SSPL) and 444-453 (QEKSPGTSPL). An SUZ-C domain is found at 427–485 (PSGSPWVRRRRQAEMGTQEKSPGTSPLLSRKMQTADGLPVGVLRLPRGPDNTRGFHGHE). The span at 482-491 (HGHERSRACV) shows a compositional bias: basic and acidic residues.

As to quaternary structure, interacts (via the HTH domain) with VIM/vimentin. Interacts (via C-terminus) with non-muscle myosin MYH10. Interacts (via C-terminus) with DHX9. In terms of tissue distribution, expressed in numerous tissues.

It localises to the cytoplasm. It is found in the nucleus. Its function is as follows. Regulates the coordinated translation of type I collagen alpha-1 and alpha-2 mRNAs, CO1A1 and CO1A2. Stabilizes mRNAs through high-affinity binding of a stem-loop structure in their 5' UTR. This regulation requires VIM and MYH10 filaments, and the helicase DHX9. This is La-related protein 6 (LARP6) from Homo sapiens (Human).